The sequence spans 234 residues: Sugar fermentation stimulation protein homolog (234 aa).

The protein belongs to the SfsA family.

The protein is Sugar fermentation stimulation protein homolog of Shewanella halifaxensis (strain HAW-EB4).